Consider the following 138-residue polypeptide: Acidic phospholipase A2 Cvv-E6e (138 aa).

The signal sequence occupies residues 1–16 (MRTLWILAVLLLGVEG). 7 disulfides stabilise this stretch: cysteine 42-cysteine 131, cysteine 44-cysteine 60, cysteine 59-cysteine 111, cysteine 65-cysteine 138, cysteine 66-cysteine 104, cysteine 73-cysteine 97, and cysteine 91-cysteine 102. 3 residues coordinate Ca(2+): tyrosine 43, glycine 45, and glycine 47. The active site involves histidine 63. Aspartate 64 is a Ca(2+) binding site. The active site involves aspartate 105.

It depends on Ca(2+) as a cofactor. Expressed by the venom gland.

It is found in the secreted. It catalyses the reaction a 1,2-diacyl-sn-glycero-3-phosphocholine + H2O = a 1-acyl-sn-glycero-3-phosphocholine + a fatty acid + H(+). In terms of biological role, snake venom phospholipase A2 (PLA2) that significantly inhibits ADP-induced platelet aggregation in platelet-rich plasma of human, rabbit and guinea pig. PLA2 catalyzes the calcium-dependent hydrolysis of the 2-acyl groups in 3-sn-phosphoglycerides. This chain is Acidic phospholipase A2 Cvv-E6e, found in Crotalus viridis viridis (Prairie rattlesnake).